A 55-amino-acid polypeptide reads, in one-letter code: ATP synthase protein 8 (55 aa).

A helical membrane pass occupies residues 6 to 26; the sequence is PHPWFAILVFSWIFFLVILPK.

This sequence belongs to the ATPase protein 8 family. In terms of assembly, F-type ATPases have 2 components, CF(1) - the catalytic core - and CF(0) - the membrane proton channel.

It localises to the mitochondrion membrane. Functionally, mitochondrial membrane ATP synthase (F(1)F(0) ATP synthase or Complex V) produces ATP from ADP in the presence of a proton gradient across the membrane which is generated by electron transport complexes of the respiratory chain. F-type ATPases consist of two structural domains, F(1) - containing the extramembraneous catalytic core and F(0) - containing the membrane proton channel, linked together by a central stalk and a peripheral stalk. During catalysis, ATP synthesis in the catalytic domain of F(1) is coupled via a rotary mechanism of the central stalk subunits to proton translocation. Part of the complex F(0) domain. Minor subunit located with subunit a in the membrane. This is ATP synthase protein 8 (MT-ATP8) from Squalus acanthias (Spiny dogfish).